An 875-amino-acid polypeptide reads, in one-letter code: MLSNTLRSNFLKFYANRNHTPVASSPVFPHNDPSILFTNAGMNQFKNIFLGKEQTSYTRATTSQKCIRAGGKHNDLENVGHTSRHLTFFEMLGNFSFGDYFKQDAISFAWEVSLSIFNFDPDFIYATVHEKDDEAFALWEKYLPTDRIFRLTDKDNFWSMADTGPCGFCSELLFDRGEKFGKAASPLEDVDGERFLEYWNLVFMEFNRTSDGTLLALQKKCVDTGAGLERLVSLLAETETVFEADVLRHLISKIENLSGTTYSPTEAKGAAFRVIADHIRSLSFAIADGLLPGNTERGYVLRKILRRAVNYGKRLGFNRPFLADVVPSLVDVMGEAYPELSASVTQIQEVLTTEEEHFFKTLQRGGNLLQQVLKSSASSAKISGEDAFKLKDTYGLPIDEIALLAKDYNYAIDMDTFEKLEVEAKERSRKNTKKTKNDSDSVFQDLDPTNTSEFIGYDTLSCDTFIEGIIKYNEIASSLEEGDEGAIILRTTPFYAGKGGQIGDSGEIFCESGTFLVSHTIAPKAGLIVHLGKLSQGSLTTTMAVTAQVNQNLRKKTANNHTGCHLLHKALEMTLGEHIRQAGSYVDSQKIRLDFTHNKALSPEDLLAIETLVNEKIRENDPVTIREVLYSDVMSSSEIKQFFGDKYGDIVRVVSAGFSHELCGGTHAQATGDIGYFRITKEHAVATGIRRIEATTGEDAENIAREQDVDLNEIATVIQSPKDQILVKIRSVMEEKKDLAKQVADLENQLVQQQVKTLLTSCEKICDTSYLVYYLTEEEGQRIQHYANAIHKEIPTNFISLWITEKNGRYIVLSRVSDDLTKRGVQAHTLLAELLAPYGGRCGGKAISAQGSSAELPQIEFLNKTLRQWISTQLA.

Residues H561, H565, C663, and H667 each contribute to the Zn(2+) site.

This sequence belongs to the class-II aminoacyl-tRNA synthetase family. It depends on Zn(2+) as a cofactor.

It is found in the cytoplasm. The enzyme catalyses tRNA(Ala) + L-alanine + ATP = L-alanyl-tRNA(Ala) + AMP + diphosphate. Functionally, catalyzes the attachment of alanine to tRNA(Ala) in a two-step reaction: alanine is first activated by ATP to form Ala-AMP and then transferred to the acceptor end of tRNA(Ala). Also edits incorrectly charged Ser-tRNA(Ala) and Gly-tRNA(Ala) via its editing domain. The sequence is that of Alanine--tRNA ligase from Chlamydia trachomatis serovar A (strain ATCC VR-571B / DSM 19440 / HAR-13).